A 276-amino-acid polypeptide reads, in one-letter code: MQIHKLCFLVLFLANAAFAVKFNFDSFDGSNLLFLGDAELGPSSDGVSRSGALSMTRDENPFSHGQGLYINQIPFKPSNTSSPFSFETSFTFSITPRTKPNSGQGFAFIITPEADNSGASDGGYLGILNKTNDGKPENHILAIEFDTFQNKEFLDISGNHVGVNINSMTSLVAEKAGYWVQTRVGKRKVWSFKDVNLSSGERFKAWVEFRNKDSTITVTLAPENVKKPKRALIEAPRVLNEVLLQNMYAGFAGSMGRAVERHDIWSWSFENAAKNN.

The N-terminal stretch at 1–19 is a signal peptide; the sequence is MQIHKLCFLVLFLANAAFA. The interval 20–270 is legume-lectin like; that stretch reads VKFNFDSFDG…RHDIWSWSFE (251 aa). 3 N-linked (GlcNAc...) asparagine glycosylation sites follow: N79, N129, and N196.

Belongs to the leguminous lectin family.

The protein localises to the secreted. It is found in the extracellular space. The protein resides in the apoplast. In Arabidopsis thaliana (Mouse-ear cress), this protein is Lectin-like protein At3g16530.